The primary structure comprises 339 residues: GTPase Obg (339 aa).

Residues 1-159 enclose the Obg domain; it reads MKFVDEAFVR…RELKLELKLL (159 aa). Residues 127 to 147 are disordered; the sequence is NTHFKSSTNRAPRRTTSGEEG. The region spanning 160–333 is the OBG-type G domain; it reads ADVGLLGLPN…LCYDLMSFLE (174 aa). GTP is bound by residues 166–173, 191–195, 213–216, 283–286, and 314–316; these read GLPNAGKS, FTTLY, DIPG, NKID, and SAI. The Mg(2+) site is built by S173 and T193.

This sequence belongs to the TRAFAC class OBG-HflX-like GTPase superfamily. OBG GTPase family. As to quaternary structure, monomer. The cofactor is Mg(2+).

The protein resides in the cytoplasm. Functionally, an essential GTPase which binds GTP, GDP and possibly (p)ppGpp with moderate affinity, with high nucleotide exchange rates and a fairly low GTP hydrolysis rate. Plays a role in control of the cell cycle, stress response, ribosome biogenesis and in those bacteria that undergo differentiation, in morphogenesis control. This chain is GTPase Obg, found in Coxiella burnetii (strain CbuG_Q212) (Coxiella burnetii (strain Q212)).